We begin with the raw amino-acid sequence, 192 residues long: Lumican (192 aa).

LRR repeat units follow at residues 1–23, 26–46, 47–68, 69–90, 94–114, 115–136, 139–162, 164–185, and 186–192; these read LQWLILDHNLLENSKIKGKVFSK, QLKKLHINHNNLTESVGPLPK, SLEDLQLTHNKITKLGSFDGLL, NLTFVHLQHNQLKEDAVSAAFK, SLEYLDLSFNQMSKLPSGLPA, SLLTLYLDNNKISDIPDEYFKR, GLQYLRLSHNELADSGIPGNSFNI, SLVELDLSYNKLKNIPTVNENL, and ENYYLEV.

It belongs to the small leucine-rich proteoglycan (SLRP) family. SLRP class II subfamily. As to quaternary structure, binds to laminin. In terms of processing, sulfated on tyrosine residue(s). Post-translationally, contains keratan sulfate.

The protein resides in the secreted. It is found in the extracellular space. Its subcellular location is the extracellular matrix. In Oryctolagus cuniculus (Rabbit), this protein is Lumican (LUM).